The primary structure comprises 382 residues: Chaperone protein DnaJ (382 aa).

The J domain occupies 5-70; that stretch reads DYYDLLGLSK…DKRAAYDRYG (66 aa). The CR-type zinc-finger motif lies at 138 to 216; sequence GTKVPINYVT…CSGSGRVRDE (79 aa). Positions 151, 154, 168, 171, 190, 193, 204, and 207 each coordinate Zn(2+). 4 CXXCXGXG motif repeats span residues 151-158, 168-175, 190-197, and 204-211; these read CSSCSGSG, CNTCHGAG, CHVCNGEG, and CKKCSGSG.

The protein belongs to the DnaJ family. Homodimer. Zn(2+) is required as a cofactor.

Its subcellular location is the cytoplasm. In terms of biological role, participates actively in the response to hyperosmotic and heat shock by preventing the aggregation of stress-denatured proteins and by disaggregating proteins, also in an autonomous, DnaK-independent fashion. Unfolded proteins bind initially to DnaJ; upon interaction with the DnaJ-bound protein, DnaK hydrolyzes its bound ATP, resulting in the formation of a stable complex. GrpE releases ADP from DnaK; ATP binding to DnaK triggers the release of the substrate protein, thus completing the reaction cycle. Several rounds of ATP-dependent interactions between DnaJ, DnaK and GrpE are required for fully efficient folding. Also involved, together with DnaK and GrpE, in the DNA replication of plasmids through activation of initiation proteins. The sequence is that of Chaperone protein DnaJ from Ehrlichia ruminantium (strain Gardel).